The primary structure comprises 350 residues: GTPase Obg (350 aa).

The 158-residue stretch at 1–158 folds into the Obg domain; sequence MFIDSVKITL…RLVRLELKLI (158 aa). An OBG-type G domain is found at 159–339; that stretch reads ADVGLVGFPN…LKFMLLEEIK (181 aa). GTP is bound by residues 165–172, 190–194, 212–215, 280–283, and 320–322; these read GFPNVGKS, FTTLT, DIPG, SKSD, and SSL. The Mg(2+) site is built by S172 and T192.

This sequence belongs to the TRAFAC class OBG-HflX-like GTPase superfamily. OBG GTPase family. In terms of assembly, monomer. It depends on Mg(2+) as a cofactor.

It localises to the cytoplasm. Its function is as follows. An essential GTPase which binds GTP, GDP and possibly (p)ppGpp with moderate affinity, with high nucleotide exchange rates and a fairly low GTP hydrolysis rate. Plays a role in control of the cell cycle, stress response, ribosome biogenesis and in those bacteria that undergo differentiation, in morphogenesis control. This chain is GTPase Obg, found in Campylobacter jejuni subsp. jejuni serotype O:2 (strain ATCC 700819 / NCTC 11168).